The chain runs to 564 residues: MDSRYNSTAGIGDLNQLSAAIPATRVEVSVSCRNLLDRDTFSKSDPICVLYVQGVGNKEWREFGRTEVIDNTLNPDFVRKFILDYFFEERENLRFDLYDVDSKSPNLSKHDFLGQVFCTLGEIVGSQGSRLEKPIVGIPGKKCGTIILTAEELNCCRDAVLMQFCANKLDKKDFFGKSDPFLVFYRSNEDGSFTICHKTEVVKNTLNPVWQAFKISVRALCNGDYDRTIKVEVYDWDRDGSHDFIGEFTTSYRELSRGQSQFNVYEVVNPKKKGKKKKYTNSGTVTLLSFLVETEVSFLDYIKGGTQINFTVAIDFTASNGNPAQPTSLHYMNPYQLNAYGMALKAVGEIVQDYDSDKMFPALGFGAKLPPDGRISHEFALNGNPQNPYCDGIEGVMEAYYRSLKSVQLYGPTNFAPVINHVARYASSVKDGSQYFVLLIVTDGVISDMAQTKESIVNASKLPMSIIIVGVGPAEFDAMVELDGDDVRVSSRGKYAERDIVQFVPFRDYIDRSGNHILSMARLAKDVLAEIPEQFLSYMRARGIKPSPAPPPYTPPTHVLQTQI.

2 consecutive C2 domains span residues 1 to 133 and 142 to 265; these read MDSR…RLEK and KCGT…FNVY. Ca(2+) is bound by residues Asp-39, Asp-45, Asp-99, Asp-101, Ser-104, Lys-109, Asp-111, Asp-173, Asp-179, Asp-235, Asp-237, and Asp-243. Position 260 is a phosphoserine (Ser-260). The region spanning 309-510 is the VWFA domain; sequence NFTVAIDFTA…VQFVPFRDYI (202 aa).

Belongs to the copine family. Requires Ca(2+) as cofactor.

Probable calcium-dependent phospholipid-binding protein that may play a role in calcium-mediated intracellular processes. The chain is Copine-8 from Homo sapiens (Human).